A 313-amino-acid chain; its full sequence is DNA-directed RNA polymerase subunit alpha (313 aa).

Residues methionine 1–asparagine 226 form an alpha N-terminal domain (alpha-NTD) region. The segment at lysine 243 to glutamate 313 is alpha C-terminal domain (alpha-CTD).

The protein belongs to the RNA polymerase alpha chain family. In terms of assembly, homodimer. The RNAP catalytic core consists of 2 alpha, 1 beta, 1 beta' and 1 omega subunit. When a sigma factor is associated with the core the holoenzyme is formed, which can initiate transcription.

The catalysed reaction is RNA(n) + a ribonucleoside 5'-triphosphate = RNA(n+1) + diphosphate. Its function is as follows. DNA-dependent RNA polymerase catalyzes the transcription of DNA into RNA using the four ribonucleoside triphosphates as substrates. This is DNA-directed RNA polymerase subunit alpha from Carboxydothermus hydrogenoformans (strain ATCC BAA-161 / DSM 6008 / Z-2901).